The sequence spans 319 residues: Tryptophan--tRNA ligase (319 aa).

ATP contacts are provided by residues 8-10 (QPS) and 16-17 (GN). Positions 9–17 (PSGDLHIGN) match the 'HIGH' region motif. Aspartate 131 provides a ligand contact to L-tryptophan. ATP-binding positions include 143–145 (GKD), valine 182, and 189–193 (KMSKS). The 'KMSKS' region motif lies at 189–193 (KMSKS).

This sequence belongs to the class-I aminoacyl-tRNA synthetase family. Homodimer.

Its subcellular location is the cytoplasm. The catalysed reaction is tRNA(Trp) + L-tryptophan + ATP = L-tryptophyl-tRNA(Trp) + AMP + diphosphate + H(+). Functionally, catalyzes the attachment of tryptophan to tRNA(Trp). The protein is Tryptophan--tRNA ligase of Campylobacter jejuni subsp. jejuni serotype O:2 (strain ATCC 700819 / NCTC 11168).